The primary structure comprises 130 residues: Small ribosomal subunit protein uS9 (130 aa).

Residues 102-130 are disordered; it reads GLLTRDSRMKERKKPGLKGARRAPQFSKR. The segment covering 111-130 has biased composition (basic residues); it reads KERKKPGLKGARRAPQFSKR.

Belongs to the universal ribosomal protein uS9 family.

In Listeria monocytogenes serovar 1/2a (strain ATCC BAA-679 / EGD-e), this protein is Small ribosomal subunit protein uS9.